A 401-amino-acid chain; its full sequence is Subtilisin-like protease 7 (401 aa).

Residues 1 to 20 form the signal peptide; sequence MGFITKAIPLALAAASVING. Residues 21–119 constitute a propeptide that is removed on maturation; that stretch reads AEILETRAGV…IERDARVQIN (99 aa). In terms of domain architecture, Inhibitor I9 spans 36 to 118; that stretch reads KYIVVMNDGM…YIERDARVQI (83 aa). The N-linked (GlcNAc...) asparagine glycan is linked to Asn58. Residues 129–401 enclose the Peptidase S8 domain; the sequence is SWGLARVGSR…SKLINNGSGM (273 aa). Active-site charge relay system residues include Asp161 and His193. N-linked (GlcNAc...) asparagine glycosylation is found at Asn223 and Asn253. The active-site Charge relay system is Ser347. Asn397 carries an N-linked (GlcNAc...) asparagine glycan.

The protein belongs to the peptidase S8 family.

It localises to the secreted. In terms of biological role, secreted subtilisin-like serine protease with keratinolytic activity that contributes to pathogenicity. This chain is Subtilisin-like protease 7 (SUB7), found in Trichophyton tonsurans (Scalp ringworm fungus).